The sequence spans 463 residues: Fumarate hydratase class II (463 aa).

Substrate-binding positions include 97-99, 128-131, 138-140, and Thr-186; these read SGT, HPND, and SSN. The active-site Proton donor/acceptor is the His-187. Ser-317 is a catalytic residue. Substrate is bound by residues Ser-318 and 323–325; that span reads KVN.

This sequence belongs to the class-II fumarase/aspartase family. Fumarase subfamily. In terms of assembly, homotetramer.

The protein localises to the cytoplasm. It catalyses the reaction (S)-malate = fumarate + H2O. It participates in carbohydrate metabolism; tricarboxylic acid cycle; (S)-malate from fumarate: step 1/1. Its function is as follows. Involved in the TCA cycle. Catalyzes the stereospecific interconversion of fumarate to L-malate. The sequence is that of Fumarate hydratase class II from Campylobacter jejuni subsp. jejuni serotype O:2 (strain ATCC 700819 / NCTC 11168).